Reading from the N-terminus, the 466-residue chain is Ribulose bisphosphate carboxylase large chain (466 aa).

Lys5 carries the post-translational modification N6,N6,N6-trimethyllysine. Residues Asn114 and Thr164 each coordinate substrate. Lys166 serves as the catalytic Proton acceptor. A substrate-binding site is contributed by Lys168. Positions 192, 194, and 195 each coordinate Mg(2+). Lys192 carries the N6-carboxylysine modification. Catalysis depends on His285, which acts as the Proton acceptor. Substrate-binding residues include Arg286, His318, and Ser370.

Belongs to the RuBisCO large chain family. Type I subfamily. In terms of assembly, heterohexadecamer of 8 large chains and 8 small chains; disulfide-linked. The disulfide link is formed within the large subunit homodimers. Mg(2+) serves as cofactor. Post-translationally, the disulfide bond which can form in the large chain dimeric partners within the hexadecamer appears to be associated with oxidative stress and protein turnover.

The protein localises to the plastid. It localises to the chloroplast. The enzyme catalyses 2 (2R)-3-phosphoglycerate + 2 H(+) = D-ribulose 1,5-bisphosphate + CO2 + H2O. It catalyses the reaction D-ribulose 1,5-bisphosphate + O2 = 2-phosphoglycolate + (2R)-3-phosphoglycerate + 2 H(+). Its function is as follows. RuBisCO catalyzes two reactions: the carboxylation of D-ribulose 1,5-bisphosphate, the primary event in carbon dioxide fixation, as well as the oxidative fragmentation of the pentose substrate in the photorespiration process. Both reactions occur simultaneously and in competition at the same active site. The chain is Ribulose bisphosphate carboxylase large chain from Adoxa moschatellina (Moschatel).